Reading from the N-terminus, the 193-residue chain is Potassium-transporting ATPase KdpC subunit (193 aa).

Residues 14–34 (ITFTFLVLCGLVYPLIVTGIA) traverse the membrane as a helical segment.

Belongs to the KdpC family. In terms of assembly, the system is composed of three essential subunits: KdpA, KdpB and KdpC.

The protein resides in the cell membrane. Functionally, part of the high-affinity ATP-driven potassium transport (or Kdp) system, which catalyzes the hydrolysis of ATP coupled with the electrogenic transport of potassium into the cytoplasm. This subunit acts as a catalytic chaperone that increases the ATP-binding affinity of the ATP-hydrolyzing subunit KdpB by the formation of a transient KdpB/KdpC/ATP ternary complex. This Bacillus cereus (strain ATCC 10987 / NRS 248) protein is Potassium-transporting ATPase KdpC subunit.